The chain runs to 433 residues: O-methyltransferase hasC (433 aa).

S-adenosyl-L-methionine-binding positions include Glu265 and 293-295 (GDF). Catalysis depends on His313, which acts as the Proton acceptor. Residues 413–433 (SPRANGNGNSAGGLEWESELM) are disordered.

The protein belongs to the class I-like SAM-binding methyltransferase superfamily. Cation-independent O-methyltransferase family. COMT subfamily.

It participates in secondary metabolite biosynthesis. In terms of biological role, O-methyltransferase; part of the gene cluster that mediates the biosynthesis of hexadehydro-astechrome (HAS), a tryptophan-derived iron(III)-complex that acts as a virulence factor in infected mice. Within the pathway, hasC, with the cytochrome P450 monooxygenase hasH and the FAD-linked oxidoreductase hasG, convert the hasE-prenylated Trp-Ala-dipeptide into an O-methylated diketopiperazine that is then released from the hasD NRPS. The HAS biosynthesis begins with the synthesis of a tethered Trp-Ala dipeptide by the NRPS hasD. The 7-dimethylallyltryptophan synthase hasE then catalyzes the prenylation of the hasD-tethered tryptophan or the resulting tethered Trp-Ala dipeptide at the C-7 position of the indole moiety. HAS biosynthesis continues via tethered intermediates with the succesive actions of the cytochrome P450 monooxygenase hasH, the O-methyltransferase hasC, and the FAD-linked oxidoreductase hasG. The resulting O-methylated diketopiperazine is then released from hasD. Finally, three O-methylated diketopiperazine molecules assemble in a trimeric complex with Fe(III) to produce hexadehydro-astechrome. The polypeptide is O-methyltransferase hasC (Aspergillus fumigatus (strain CBS 144.89 / FGSC A1163 / CEA10) (Neosartorya fumigata)).